The chain runs to 96 residues: Copper-sensing transcriptional repressor RicR (96 aa).

T2 is modified (N-acetylthreonine). Positions 38, 63, and 67 each coordinate Cu cation.

This sequence belongs to the CsoR family.

It localises to the cytoplasm. In terms of biological role, under low copper conditions, represses the expression of lpqS, Rv2963, mymT, socA, socB, mmcO and its own expression. In the presence of copper, RicR dissociates from DNA, leading to the expression of the target genes. Members of the RicR regulon are important for copper resistance during infections and full virulence in a mouse model of infection. This chain is Copper-sensing transcriptional repressor RicR, found in Mycobacterium tuberculosis (strain ATCC 25618 / H37Rv).